The chain runs to 159 residues: Large ribosomal subunit protein uL23m (159 aa).

This sequence belongs to the universal ribosomal protein uL23 family. Component of the mitochondrial ribosome large subunit (39S) which comprises a 16S rRNA and about 50 distinct proteins.

The protein localises to the mitochondrion. The protein is Large ribosomal subunit protein uL23m (mrpl-23) of Caenorhabditis briggsae.